Consider the following 187-residue polypeptide: Putative type I specificity subunit S.MpnORF289P N-terminus (187 aa).

This sequence belongs to the type-I restriction system S methylase family. As to quaternary structure, the methyltransferase is composed of M and S polypeptides.

In terms of biological role, the N-terminal section of a specificity (S) subunit of a type I methyltransferase (MTase); this subunit dictates DNA sequence specificity. The single R subunit has multiple frameshifts and is probably not expressed. This is Putative type I specificity subunit S.MpnORF289P N-terminus from Mycoplasma pneumoniae (strain ATCC 29342 / M129 / Subtype 1) (Mycoplasmoides pneumoniae).